We begin with the raw amino-acid sequence, 1389 residues long: MAERADLVFHNKVIDGTAMKRLISRLIDHFGMAYTSHILDQVKTLGFQQATATSISLGIDDLLTIPSKGWLVQDAEQQSLILEKYHHYGNVHAVEKLRQSIEIWYATSEYLRQEMNPNFRMTDPSNPVHIMSFSGARGNASQVHQLVGMRGLMSDPQGQMIDLPIQSNLREGLSLTEYIISCYGARKGVVDTAVRTSDAGYLTRRLVEVVQHIVVRRTDCGTIRGIFVSPQNGMAKRIFIQTLIGRVLADDIYMGPRCIAARNQYIGIGLVNRFITFRAQPISIRTPFTCRSTSWICRLCYGRSPTHGDLVELGEAVGIIAGQSIGEPGTQLTLRTFHTGGVFTGGTAEHVRAPSNGKIKFNEDLVHPTRTRHGHPAFLCYIDLYVTIENQDIIHNVNIPPKSFLLVQNDQYVESEQVIAEIRAGASTLNFKERVRKHIYSDSEGEMHWSTDVYHASEYTYGNVHLLPKTSHLWILSGSPYRSSIVPFSLHKDQDQMNVHSLSVERGSISDLSVTNDRVRHKLFSSDLSGKKRGGILDYSGPDRIISNGHGHWNFIYPAILHENSDLLAKRRRNRFIIPFQYDQEREKELMPRSGISIEIPINGIFRRKSILAYFDDPRYRKSSSGITKYGTIEVDSIVKKEDLIEYRGAKEFRPKYQMKVDRFFFIPEEVHILTGSSSIMVRNNSIIGVDTRIALNTRSRVGGLVRVEKKKKRIELKIFSGDIHFPGETDKISRHSGILIPPGTGKKNPKESKKWKNWIYVQQITPTKKKYFVSVRSVVTYEIADGINLATLFPQDLLQERDNVQLRVVNYILYGNGKPIRGISHTSIQLVRTCLVLNWDQDRNGSIEEAHASFVEVRANALIRDFIRIHLVKSPISYTVKRNDTASSGLIPDNASDRPNINPFDFKARVQSLTQHQGTIRTLLNRNKECQSLIILSSSNCSRLGPFNGSKYHNVTKESIQTKDKEDPSISIRNSLGPLGIVPKIANFYYLMTHNQILLNKYLLLDNLKQTFQVLQYYQVIKYSLMDENGQIYNPDPYSNTILNPFDLNWRFLHHDYCEETSTIISLGQFICENGCISKYGPHIESGQVLIVHVDSLVIRSAKPHLATPGATVHGHYGEILYEGDTLVTFIYEKSRSGDITQGLPKVEQVLEVRSIDSISINLEKRVEGWNERITRIIGIPWGFLIGAELTIAQSRISLVNKIQKVYRSQGVQIHNRHIEIIVRQITSKVLVSEDGMSNVFSPGELIGLLRAERTGRALEEAICYRAILLGITRTSLNTQSFISEASFQETARVLAKAALRGRIDWLKGLKENVVLGGMIPVGTGFKGLVHRSRQHNNSPLEIKKKNLFEGEMRDILFHHRELFGSCIPNHFHDTSEQSFTFTGFHDS.

4 residues coordinate Zn(2+): C220, C290, C297, and C300.

This sequence belongs to the RNA polymerase beta' chain family. RpoC2 subfamily. As to quaternary structure, in plastids the minimal PEP RNA polymerase catalytic core is composed of four subunits: alpha, beta, beta', and beta''. When a (nuclear-encoded) sigma factor is associated with the core the holoenzyme is formed, which can initiate transcription. Zn(2+) is required as a cofactor.

The protein resides in the plastid. It localises to the chloroplast. The catalysed reaction is RNA(n) + a ribonucleoside 5'-triphosphate = RNA(n+1) + diphosphate. Functionally, DNA-dependent RNA polymerase catalyzes the transcription of DNA into RNA using the four ribonucleoside triphosphates as substrates. This is DNA-directed RNA polymerase subunit beta'' from Chloranthus spicatus (Chulantree).